The chain runs to 199 residues: Elongation factor Ts (199 aa).

Residues 82 to 85 (TDFV) form an involved in Mg(2+) ion dislocation from EF-Tu region.

Belongs to the EF-Ts family.

The protein localises to the cytoplasm. Associates with the EF-Tu.GDP complex and induces the exchange of GDP to GTP. It remains bound to the aminoacyl-tRNA.EF-Tu.GTP complex up to the GTP hydrolysis stage on the ribosome. This chain is Elongation factor Ts, found in Leptospira borgpetersenii serovar Hardjo-bovis (strain JB197).